A 212-amino-acid chain; its full sequence is Imidazole glycerol phosphate synthase subunit HisH (212 aa).

The region spanning S3–P212 is the Glutamine amidotransferase type-1 domain. C82 acts as the Nucleophile in catalysis. Catalysis depends on residues H192 and E194.

Heterodimer of HisH and HisF.

It localises to the cytoplasm. It carries out the reaction 5-[(5-phospho-1-deoxy-D-ribulos-1-ylimino)methylamino]-1-(5-phospho-beta-D-ribosyl)imidazole-4-carboxamide + L-glutamine = D-erythro-1-(imidazol-4-yl)glycerol 3-phosphate + 5-amino-1-(5-phospho-beta-D-ribosyl)imidazole-4-carboxamide + L-glutamate + H(+). The catalysed reaction is L-glutamine + H2O = L-glutamate + NH4(+). The protein operates within amino-acid biosynthesis; L-histidine biosynthesis; L-histidine from 5-phospho-alpha-D-ribose 1-diphosphate: step 5/9. IGPS catalyzes the conversion of PRFAR and glutamine to IGP, AICAR and glutamate. The HisH subunit catalyzes the hydrolysis of glutamine to glutamate and ammonia as part of the synthesis of IGP and AICAR. The resulting ammonia molecule is channeled to the active site of HisF. The protein is Imidazole glycerol phosphate synthase subunit HisH of Nitrosomonas europaea (strain ATCC 19718 / CIP 103999 / KCTC 2705 / NBRC 14298).